Consider the following 396-residue polypeptide: Inositol polyphosphate multikinase (396 aa).

Residues 1-13 (MAAEPPALRLRPP) show a composition bias toward low complexity. The interval 1 to 22 (MAAEPPALRLRPPGSTGDSPPV) is disordered. A2 is modified (N-acetylalanine). S19 carries the phosphoserine modification. An ATP-binding site is contributed by K58. A substrate-binding site is contributed by R65. ATP-binding positions include 114 to 116 (EDV) and D127. Residues K129, 143-150 (KIQQQVSK), and Q179 each bind substrate. Positions 300 to 310 (RHRKLYAKKHQ) match the Nuclear localization signal motif. ATP is bound at residue D365.

The protein belongs to the inositol phosphokinase (IPK) family. It depends on Mg(2+) as a cofactor.

It localises to the nucleus. It carries out the reaction 1D-myo-inositol 1,4,5-trisphosphate + 2 ATP = 1D-myo-inositol 1,3,4,5,6-pentakisphosphate + 2 ADP + 2 H(+). The enzyme catalyses 1D-myo-inositol 1,3,4,6-tetrakisphosphate + ATP = 1D-myo-inositol 1,3,4,5,6-pentakisphosphate + ADP + H(+). The catalysed reaction is 1-octadecanoyl-2-(5Z,8Z,11Z,14Z)-eicosatetraenoyl-sn-glycero-3-phospho-1D-myo-inositol 4,5-bisphosphate + ATP = 1-octadecanoyl-2-(5Z,8Z,11Z,14Z-eicosatetraenoyl)-sn-glycero-3-phospho-(1D-myo-inositol 3,4,5-triphosphate) + ADP + H(+). It catalyses the reaction a 1,2-diacyl-sn-glycero-3-phospho-(1D-myo-inositol-4,5-bisphosphate) + ATP = a 1,2-diacyl-sn-glycero-3-phospho-(1D-myo-inositol-3,4,5-trisphosphate) + ADP + H(+). It carries out the reaction 1D-myo-inositol 1,4,5,6-tetrakisphosphate + ATP = 1D-myo-inositol 1,3,4,5,6-pentakisphosphate + ADP + H(+). Its pathway is phospholipid metabolism; phosphatidylinositol metabolism. Its function is as follows. Inositol phosphate kinase with a broad substrate specificity. Phosphorylates inositol 1,4,5-trisphosphate (Ins(1,4,5)P3) first to inositol 1,3,4,5-tetrakisphosphate and then to inositol 1,3,4,5,6-pentakisphosphate (Ins(1,3,4,5,6)P5). Phosphorylates inositol 1,3,4,6-tetrakisphosphate (Ins(1,3,4,6)P4). Phosphorylates inositol 1,4,5,6-tetrakisphosphate (Ins(1,4,5,6)P4). Phosphorylates glycero-3-phospho-1D-myo-inositol 4,5-bisphosphate to glycero-3-phospho-1D-myo-inositol 3,4,5-trisphosphate. Plays an important role in MLKL-mediated necroptosis via its role in the biosynthesis of inositol pentakisphosphate (InsP5) and inositol hexakisphosphate (InsP6). Binding of these highly phosphorylated inositol phosphates to MLKL mediates the release of an N-terminal auto-inhibitory region, leading to activation of the kinase. Essential for activated phospho-MLKL to oligomerize and localize to the cell membrane during necroptosis. Required for normal embryonic development, probably via its role in the biosynthesis of inositol 1,3,4,5,6-pentakisphosphate (Ins(1,3,4,5,6)P5) and inositol hexakisphosphate (InsP6). This is Inositol polyphosphate multikinase (Ipmk) from Mus musculus (Mouse).